The sequence spans 86 residues: Large ribosomal subunit protein eL43 (86 aa).

The segment at 38-59 (CPVCGRKAVRRISTGIWQCQKC) adopts a C4-type zinc-finger fold.

Belongs to the eukaryotic ribosomal protein eL43 family. Zn(2+) is required as a cofactor.

The polypeptide is Large ribosomal subunit protein eL43 (Thermococcus onnurineus (strain NA1)).